The chain runs to 170 residues: Acetyl-CoA decarbonylase/synthase complex subunit epsilon 2 (170 aa).

It belongs to the CdhB family. Heterotetramer of two alpha and two epsilon subunits. The ACDS complex is made up of alpha, epsilon, beta, gamma and delta subunits with a probable stoichiometry of (alpha(2)epsilon(2))(4)-beta(8)-(gamma(1)delta(1))(8).

Its pathway is one-carbon metabolism; methanogenesis from acetate. In terms of biological role, part of a complex that catalyzes the reversible cleavage of acetyl-CoA, allowing growth on acetate as sole source of carbon and energy. The alpha-epsilon subcomponent functions as a carbon monoxide dehydrogenase. The precise role of the epsilon subunit is unclear; it may have a stabilizing role within the alpha(2)epsilon(2) component and/or be involved in electron transfer to FAD during a potential FAD-mediated CO oxidation. This is Acetyl-CoA decarbonylase/synthase complex subunit epsilon 2 (cdhB2) from Methanosarcina acetivorans (strain ATCC 35395 / DSM 2834 / JCM 12185 / C2A).